The sequence spans 487 residues: Betaine aldehyde dehydrogenase (487 aa).

Residues isoleucine 27 and aspartate 93 each coordinate K(+). Residue glycine 149 to tryptophan 151 coordinates NAD(+). The Charge relay system role is filled by lysine 161. Residues lysine 175–glutamate 178 and serine 228–threonine 231 contribute to the NAD(+) site. Residue leucine 243 participates in K(+) binding. The active-site Proton acceptor is glutamate 249. Glycine 251, cysteine 283, and glutamate 384 together coordinate NAD(+). Cysteine 283 serves as the catalytic Nucleophile. At cysteine 283 the chain carries Cysteine sulfenic acid (-SOH). 2 residues coordinate K(+): lysine 454 and glycine 457. Catalysis depends on glutamate 461, which acts as the Charge relay system.

This sequence belongs to the aldehyde dehydrogenase family. As to quaternary structure, dimer of dimers. It depends on K(+) as a cofactor.

It catalyses the reaction betaine aldehyde + NAD(+) + H2O = glycine betaine + NADH + 2 H(+). It functions in the pathway amine and polyamine biosynthesis; betaine biosynthesis via choline pathway; betaine from betaine aldehyde: step 1/1. Its function is as follows. Involved in the biosynthesis of the osmoprotectant glycine betaine. Catalyzes the irreversible oxidation of betaine aldehyde to the corresponding acid. The chain is Betaine aldehyde dehydrogenase from Brucella melitensis biotype 2 (strain ATCC 23457).